A 666-amino-acid polypeptide reads, in one-letter code: Endogenous retrovirus group K member 24 Gag polyprotein (666 aa).

The N-myristoyl glycine moiety is linked to residue G2. Residues 165 to 264 form a disordered region; it reads GKGPELVGPS…APPSRQGSEL (100 aa). A compositionally biased stretch (pro residues) spans 232–247; the sequence is GMPPAPQGRAPYPQPP. 2 CCHC-type zinc fingers span residues 544 to 561 and 580 to 597; these read GKCY…NCPV and DLCP…QCRS. The tract at residues 598-641 is disordered; it reads KFDKNGQPLSGNEQRGQPQAPQQTGAFPIQPFVPQGFQGQQPPL. The span at 604–622 shows a compositional bias: polar residues; it reads QPLSGNEQRGQPQAPQQTG. The span at 624 to 640 shows a compositional bias: low complexity; that stretch reads FPIQPFVPQGFQGQQPP.

This sequence belongs to the beta type-B retroviral Gag protein family. HERV class-II K(HML-2) gag subfamily. In terms of processing, myristoylation is essential for retroviral assembly. Alteration of the glycine residue leads to a block in the budding of particles and an accumulation of Gag inside the cell. Post-translationally, specific enzymatic cleavages may yield mature proteins.

It localises to the cell membrane. The products of the Gag polyproteins of infectious retroviruses perform highly complex orchestrated tasks during the assembly, budding, maturation, and infection stages of the viral replication cycle. During viral assembly, the proteins form membrane associations and self-associations that ultimately result in budding of an immature virion from the infected cell. Gag precursors also function during viral assembly to selectively bind and package two plus strands of genomic RNA. Endogenous Gag proteins may have kept, lost or modified their original function during evolution. This Homo sapiens (Human) protein is Endogenous retrovirus group K member 24 Gag polyprotein (ERVK-24).